A 268-amino-acid polypeptide reads, in one-letter code: 4-hydroxy-tetrahydrodipicolinate reductase (268 aa).

NAD(+) is bound by residues 9 to 14, 99 to 101, and 123 to 126; these read GAAGRM, GTT, and ASNF. Catalysis depends on histidine 156, which acts as the Proton donor/acceptor. Histidine 157 is a binding site for (S)-2,3,4,5-tetrahydrodipicolinate. The Proton donor role is filled by lysine 160. 166-167 contributes to the (S)-2,3,4,5-tetrahydrodipicolinate binding site; the sequence is GT.

The protein belongs to the DapB family.

It localises to the cytoplasm. The catalysed reaction is (S)-2,3,4,5-tetrahydrodipicolinate + NAD(+) + H2O = (2S,4S)-4-hydroxy-2,3,4,5-tetrahydrodipicolinate + NADH + H(+). The enzyme catalyses (S)-2,3,4,5-tetrahydrodipicolinate + NADP(+) + H2O = (2S,4S)-4-hydroxy-2,3,4,5-tetrahydrodipicolinate + NADPH + H(+). Its pathway is amino-acid biosynthesis; L-lysine biosynthesis via DAP pathway; (S)-tetrahydrodipicolinate from L-aspartate: step 4/4. Functionally, catalyzes the conversion of 4-hydroxy-tetrahydrodipicolinate (HTPA) to tetrahydrodipicolinate. This chain is 4-hydroxy-tetrahydrodipicolinate reductase, found in Saccharophagus degradans (strain 2-40 / ATCC 43961 / DSM 17024).